The following is a 179-amino-acid chain: Protein GrpE (179 aa).

The interval 1 to 20 (MSEETKEEIKNEKVDEEVTE) is disordered.

This sequence belongs to the GrpE family. In terms of assembly, homodimer.

It localises to the cytoplasm. Functionally, participates actively in the response to hyperosmotic and heat shock by preventing the aggregation of stress-denatured proteins, in association with DnaK and GrpE. It is the nucleotide exchange factor for DnaK and may function as a thermosensor. Unfolded proteins bind initially to DnaJ; upon interaction with the DnaJ-bound protein, DnaK hydrolyzes its bound ATP, resulting in the formation of a stable complex. GrpE releases ADP from DnaK; ATP binding to DnaK triggers the release of the substrate protein, thus completing the reaction cycle. Several rounds of ATP-dependent interactions between DnaJ, DnaK and GrpE are required for fully efficient folding. The chain is Protein GrpE from Lactococcus lactis subsp. lactis (strain IL1403) (Streptococcus lactis).